Reading from the N-terminus, the 443-residue chain is ATP-dependent protease ATPase subunit HslU (443 aa).

ATP-binding positions include Ile18 and Gly60 to Glu65. The interval Ala139–Lys161 is disordered. 3 residues coordinate ATP: Asp256, Glu321, and Arg393.

Belongs to the ClpX chaperone family. HslU subfamily. As to quaternary structure, a double ring-shaped homohexamer of HslV is capped on each side by a ring-shaped HslU homohexamer. The assembly of the HslU/HslV complex is dependent on binding of ATP.

The protein localises to the cytoplasm. Its function is as follows. ATPase subunit of a proteasome-like degradation complex; this subunit has chaperone activity. The binding of ATP and its subsequent hydrolysis by HslU are essential for unfolding of protein substrates subsequently hydrolyzed by HslV. HslU recognizes the N-terminal part of its protein substrates and unfolds these before they are guided to HslV for hydrolysis. The protein is ATP-dependent protease ATPase subunit HslU of Nitrosomonas eutropha (strain DSM 101675 / C91 / Nm57).